Reading from the N-terminus, the 282-residue chain is Shikimate dehydrogenase (NADP(+)) (282 aa).

Shikimate-binding positions include 15 to 17 (SKS) and T62. Residue K66 is the Proton acceptor of the active site. Shikimate-binding residues include N87 and D103. NADP(+) contacts are provided by residues 127 to 131 (GAGGA), 151 to 156 (NRTHTK), and M220. Residue Y222 coordinates shikimate. Residue G244 participates in NADP(+) binding.

The protein belongs to the shikimate dehydrogenase family. As to quaternary structure, homodimer.

It carries out the reaction shikimate + NADP(+) = 3-dehydroshikimate + NADPH + H(+). Its pathway is metabolic intermediate biosynthesis; chorismate biosynthesis; chorismate from D-erythrose 4-phosphate and phosphoenolpyruvate: step 4/7. Involved in the biosynthesis of the chorismate, which leads to the biosynthesis of aromatic amino acids. Catalyzes the reversible NADPH linked reduction of 3-dehydroshikimate (DHSA) to yield shikimate (SA). This Shewanella putrefaciens (strain CN-32 / ATCC BAA-453) protein is Shikimate dehydrogenase (NADP(+)).